A 295-amino-acid chain; its full sequence is Probable palmitoyltransferase ZDHHC24 (295 aa).

The Cytoplasmic segment spans residues 1–20 (MTSFMSRVWCKVESTGRQLP). A helical membrane pass occupies residues 21-41 (IVLNAVLVFSITAEVSYLVLV). Over 42-60 (EAPFEPEQKKTDWSTIWTG) the chain is Extracellular. The chain crosses the membrane as a helical span at residues 61 to 81 (LHLFAQYFMLGNITWNASLFV). At 82–151 (KTNPSIRGVF…HNYRYFLTCL (70 aa)) the chain is on the cytoplasmic side. The 51-residue stretch at 102 to 152 (RYCYNCETHTPPRCSHCYDCNVCVLRRDHHCVFFGQCVGFHNYRYFLTCLL) folds into the DHHC domain. Cysteine 132 serves as the catalytic S-palmitoyl cysteine intermediate. Residues 152–172 (LFMWAGLLYAVVMNAEVFIFI) form a helical membrane-spanning segment. The Extracellular portion of the chain corresponds to 173-176 (LKEG). The helical transmembrane segment at 177-197 (VTFHSVMLLLVPWIMLVSGQV) threads the bilayer. Residues 198-203 (TTRAFA) are Cytoplasmic-facing. The helical transmembrane segment at 204–224 (FAFIADTCVVGFLLVAAFLFF) threads the bilayer. Topologically, residues 225–295 (HVALMLRGQT…SLEPKKQAVH (71 aa)) are extracellular.

Belongs to the DHHC palmitoyltransferase family.

It localises to the membrane. It carries out the reaction L-cysteinyl-[protein] + hexadecanoyl-CoA = S-hexadecanoyl-L-cysteinyl-[protein] + CoA. In terms of biological role, probable palmitoyltransferase that could catalyze the addition of palmitate onto various protein substrates. This is Probable palmitoyltransferase ZDHHC24 from Danio rerio (Zebrafish).